The sequence spans 229 residues: Large ribosomal subunit protein uL1 (229 aa).

It belongs to the universal ribosomal protein uL1 family. As to quaternary structure, part of the 50S ribosomal subunit.

In terms of biological role, binds directly to 23S rRNA. The L1 stalk is quite mobile in the ribosome, and is involved in E site tRNA release. Functionally, protein L1 is also a translational repressor protein, it controls the translation of the L11 operon by binding to its mRNA. This Streptococcus agalactiae serotype Ia (strain ATCC 27591 / A909 / CDC SS700) protein is Large ribosomal subunit protein uL1.